The sequence spans 233 residues: Zein-alpha PMS2 (233 aa).

The N-terminal stretch at 1–21 is a signal peptide; that stretch reads MAAKIFCFLMLLGLSASVATA.

It belongs to the zein family.

Its function is as follows. Zeins are major seed storage proteins. The sequence is that of Zein-alpha PMS2 (ZMPMS2) from Zea mays (Maize).